The primary structure comprises 164 residues: MKRIAICPGSFDPITNGHLDIIERAAPIFDEIIVAVLNNSSKQPLFSVQERMELISEVTEHLPHIKVDAFNGLLVDYASTVGADVIVRGLRAVSDFEYEMQVASINKKMNDQIETLFMMTNNQYSFLSSSIVKEAAKYGASVAGLVPPAVEEALRHKYSEGELR.

Substrate is bound at residue S10. ATP is bound by residues 10–11 (SF) and H18. Substrate contacts are provided by K42, L74, and R88. Residues 89 to 91 (GLR), E99, and 124 to 130 (YSFLSSS) each bind ATP.

Belongs to the bacterial CoaD family. As to quaternary structure, homohexamer. The cofactor is Mg(2+).

It is found in the cytoplasm. It carries out the reaction (R)-4'-phosphopantetheine + ATP + H(+) = 3'-dephospho-CoA + diphosphate. Its pathway is cofactor biosynthesis; coenzyme A biosynthesis; CoA from (R)-pantothenate: step 4/5. Reversibly transfers an adenylyl group from ATP to 4'-phosphopantetheine, yielding dephospho-CoA (dPCoA) and pyrophosphate. In Exiguobacterium sibiricum (strain DSM 17290 / CCUG 55495 / CIP 109462 / JCM 13490 / 255-15), this protein is Phosphopantetheine adenylyltransferase.